A 207-amino-acid chain; its full sequence is Ribosomal RNA small subunit methyltransferase G (207 aa).

Residues G76, Q81, 127 to 128, and R141 contribute to the S-adenosyl-L-methionine site; that span reads VE.

It belongs to the methyltransferase superfamily. RNA methyltransferase RsmG family.

The protein localises to the cytoplasm. The enzyme catalyses guanosine(527) in 16S rRNA + S-adenosyl-L-methionine = N(7)-methylguanosine(527) in 16S rRNA + S-adenosyl-L-homocysteine. In terms of biological role, specifically methylates the N7 position of guanine in position 527 of 16S rRNA. In Neisseria meningitidis serogroup C (strain 053442), this protein is Ribosomal RNA small subunit methyltransferase G.